The chain runs to 472 residues: 2-oxoisovalerate dehydrogenase subunit alpha 1, mitochondrial (472 aa).

The N-terminal 56 residues, 1-56 (MAIWFARSKTLVSSLRHNLNLSTILIKRDYSHRPIFYTTSQLSSTAYLSPFGSLRH), are a transit peptide targeting the mitochondrion. A thiamine diphosphate-binding site is contributed by 185–187 (QYR). Residues S234, T239, and Q240 each contribute to the K(+) site.

It belongs to the BCKDHA family. As to quaternary structure, heterotetramer of alpha and beta chains. The cofactor is thiamine diphosphate.

The protein resides in the mitochondrion matrix. The catalysed reaction is N(6)-[(R)-lipoyl]-L-lysyl-[protein] + 3-methyl-2-oxobutanoate + H(+) = N(6)-[(R)-S(8)-2-methylpropanoyldihydrolipoyl]-L-lysyl-[protein] + CO2. Its function is as follows. The branched-chain alpha-keto dehydrogenase complex catalyzes the overall conversion of alpha-keto acids to acyl-CoA and CO(2). It contains multiple copies of three enzymatic components: branched-chain alpha-keto acid decarboxylase (E1), lipoamide acyltransferase (E2) and lipoamide dehydrogenase (E3). Required during sugar starvation. The sequence is that of 2-oxoisovalerate dehydrogenase subunit alpha 1, mitochondrial from Arabidopsis thaliana (Mouse-ear cress).